The primary structure comprises 718 residues: Exostosin-2 (718 aa).

Residues 1-25 are Cytoplasmic-facing; sequence MCASVKSNIRGPALIPRMKTKHRIY. The chain crosses the membrane as a helical; Signal-anchor for type II membrane protein span at residues 26 to 46; it reads YVTLFSIVLLGLIATGMFQFW. At 47-718 the chain is on the lumenal side; the sequence is PHSIESSSDG…LKSFPNIGSL (672 aa). 4 cysteine pairs are disulfide-bonded: Cys85–Cys90, Cys96–Cys151, Cys286–Cys300, and Cys318–Cys339. Asn288 carries N-linked (GlcNAc...) asparagine glycosylation. Leu461, Arg465, Asn490, and Asn517 together coordinate UDP. The UDP-N-acetyl-alpha-D-glucosamine site is built by Arg465, Asn490, Asn517, Arg522, Asp538, Asp539, and Asp540. The UDP site is built by Asp538 and Asp539. Asp540 serves as a coordination point for Mn(2+). Positions 582 and 584 each coordinate a protein. An intrachain disulfide couples Cys626 to Cys676. Residues Glu627 and Asp628 each coordinate UDP-N-acetyl-alpha-D-glucosamine. The N-linked (GlcNAc...) asparagine glycan is linked to Asn637. Residues Lys651 and Lys653 each coordinate a protein. Arg673 provides a ligand contact to UDP-N-acetyl-alpha-D-glucosamine.

Belongs to the glycosyltransferase 47 family. Part of the heparan sulfate polymerase, a dimeric complex composed of EXT1 and EXT2. Could also form homooligomeric complexes. Interacts with NDST1. Interacts with GALNT5. Requires Mn(2+) as cofactor. Post-translationally, N-glycosylated at Asn-637. A soluble form is generated by proteolytic processing. Expressed in heart, brain, spleen, lung, liver, skeletal muscle and testis. Heart shows a high expression.

It is found in the golgi apparatus membrane. It localises to the golgi apparatus. The protein resides in the cis-Golgi network membrane. Its subcellular location is the endoplasmic reticulum membrane. The protein localises to the secreted. It catalyses the reaction 3-O-{[(1-&gt;4)-beta-D-GlcA-(1-&gt;4)-alpha-D-GlcNAc](n)-(1-&gt;4)-beta-D-GlcA-(1-&gt;3)-beta-D-Gal-(1-&gt;3)-beta-D-Gal-(1-&gt;4)-beta-D-Xyl}-L-seryl-[protein] + UDP-N-acetyl-alpha-D-glucosamine = 3-O-{alpha-D-GlcNAc-[(1-&gt;4)-beta-D-GlcA-(1-&gt;4)-alpha-D-GlcNAc](n)-(1-&gt;4)-beta-D-GlcA-(1-&gt;3)-beta-D-Gal-(1-&gt;3)-beta-D-Gal-(1-&gt;4)-beta-D-Xyl}-L-seryl-[protein] + UDP + H(+). It functions in the pathway protein modification; protein glycosylation. Its function is as follows. Glycosyltransferase forming with EXT1 the heterodimeric heparan sulfate polymerase which catalyzes the elongation of the heparan sulfate glycan backbone. Glycan backbone extension consists in the alternating transfer of (1-&gt;4)-beta-D-GlcA and (1-&gt;4)-alpha-D-GlcNAc residues from their respective UDP-sugar donors. Both EXT1 and EXT2 are required for the full activity of the polymerase since EXT1 bears the N-acetylglucosaminyl-proteoglycan 4-beta-glucuronosyltransferase activity within the complex while EXT2 carries the glucuronosyl-N-acetylglucosaminyl-proteoglycan 4-alpha-N-acetylglucosaminyltransferase activity. Heparan sulfate proteoglycans are ubiquitous components of the extracellular matrix and play an important role in tissue homeostasis and signaling. The sequence is that of Exostosin-2 from Mus musculus (Mouse).